An 872-amino-acid chain; its full sequence is MSDSQDQDRKAPLKLTQPGKLELKKTVETGQVRQSFSHGRSKVVTVEVRKKRTFTSAGGAMHEIKDGVHSVAEADLAAAVAKVEAASRAASAHDLTTGEKAARAKALQDALRHEEEVRARAEEEAIRHAAEEEAARAAEEEAARLAEEEAARRAAEPQSEPEAAAPAAEPVAPTAPVAAAPAPAPATPVAPAQPKPVAAAAPAGDATAVPRARTEEEEEEEERAKKRAAAHKPAPVKRTEPRRRTGKLTITDALTDDDRSERGRSLAAVKRARERERLKHMQKGSEKVIREVIVPESITVQELANRMAVRGADVIKCLMRLGVMATINQNIDADTAELVVTEFGHNMKRVSEADVLVGLEGEADTDEVLFTRPPVVTVMGHVDHGKTSLLDALRATDVVSGEAGGITQHIGAYQVTMSSGDKITFIDTPGHEAFTAMRARGAKVTDIVVLVVAADDGIMPQTVEAIRHAKAAGVPIIVAINKIDKPGATPEKVRQELLQHELVTEELGGDVLAIEVSAKKRLNLEKLEEAILLQAEILDLKANPTRAAQGVVVEAKMEKGRGSVATVLVQKGTLKVGEVFVAGAEWGRVRALVDDHGNSIKEAGPSTPVEVLGLQGTPAAGDDFVTVEDEARAREIAGYRSRMDREAKAKLAQRGTLEQMFSAIKSGEAQELPVVIKGDVQGSIEAISSTLEKMGNENVKVRILHAAVGAINESDITLAKASNGLLIGFNVRANPQARDMARRDGVDIRYYSIIYDVTDDLKKMLSGMLAPELREKFLGYASIREVFNITKVGKVAGCMITEGTVKRGAKVRLLRDNVVIHTGDLGQLKRFKDDVKDVREGYECGMSFTNYEDIRVGDVIECFEIEEIAVTL.

Basic and acidic residues predominate over residues 130–155 (AEEEAARAAEEEAARLAEEEAARRAA). Residues 130-282 (AEEEAARAAE…RERERLKHMQ (153 aa)) form a disordered region. The segment covering 156 to 181 (EPQSEPEAAAPAAEPVAPTAPVAAAP) has biased composition (low complexity). A compositionally biased stretch (pro residues) spans 182-194 (APAPATPVAPAQP). The span at 195 to 211 (KPVAAAAPAGDATAVPR) shows a compositional bias: low complexity. Residues 271-282 (RARERERLKHMQ) are compositionally biased toward basic and acidic residues. A tr-type G domain is found at 371 to 539 (TRPPVVTVMG…AILLQAEILD (169 aa)). The interval 380–387 (GHVDHGKT) is G1. Residue 380 to 387 (GHVDHGKT) coordinates GTP. The tract at residues 405–409 (GITQH) is G2. Residues 427 to 430 (DTPG) are G3. GTP is bound by residues 427 to 431 (DTPGH) and 481 to 484 (NKID). A G4 region spans residues 481 to 484 (NKID). The segment at 517 to 519 (SAK) is G5.

It belongs to the TRAFAC class translation factor GTPase superfamily. Classic translation factor GTPase family. IF-2 subfamily.

The protein resides in the cytoplasm. One of the essential components for the initiation of protein synthesis. Protects formylmethionyl-tRNA from spontaneous hydrolysis and promotes its binding to the 30S ribosomal subunits. Also involved in the hydrolysis of GTP during the formation of the 70S ribosomal complex. The chain is Translation initiation factor IF-2 from Paramagnetospirillum magneticum (strain ATCC 700264 / AMB-1) (Magnetospirillum magneticum).